The chain runs to 287 residues: Protease HtpX (287 aa).

2 helical membrane-spanning segments follow: residues 4-24 (IFLL…VMSI) and 33-53 (SGLL…SLAI). His-139 contacts Zn(2+). Residue Glu-140 is part of the active site. His-143 provides a ligand contact to Zn(2+). Helical transmembrane passes span 154–174 (LIQG…AGII) and 195–215 (AVVF…VAYF). A Zn(2+)-binding site is contributed by Glu-220.

This sequence belongs to the peptidase M48B family. Zn(2+) serves as cofactor.

The protein localises to the cell inner membrane. The chain is Protease HtpX from Shewanella piezotolerans (strain WP3 / JCM 13877).